The chain runs to 251 residues: Probable ATP-dependent transporter ycf16 (251 aa).

One can recognise an ABC transporter domain in the interval 8-250; sequence LEIKNLKACI…ELESKGYEWL (243 aa). Position 40-47 (40-47) interacts with ATP; it reads GPNGSGKS.

This sequence belongs to the ABC transporter superfamily. Ycf16 family.

The protein localises to the plastid. The protein resides in the chloroplast. This chain is Probable ATP-dependent transporter ycf16 (ycf16), found in Trieres chinensis (Marine centric diatom).